The primary structure comprises 637 residues: Probable potassium transport system protein Kup (637 aa).

A run of 12 helical transmembrane segments spans residues 24-44, 64-84, 113-133, 151-171, 182-202, 225-245, 261-281, 290-310, 351-371, 381-401, 409-429, and 433-453; these read LAIAAIGVVFGDIGTSPLYAL, VISLLFWAIILVVGIKYLLFV, AGALMALGIFGACMFYGDAVI, PHLSHLVLPITIVILIALFWI, LFGPIMVVWFIVIAALGVYHI, LLQAYVVLGSVVLVLTGAEAL, AYGLVMPSLVLNYFGQGALLI, PFFLLAPEWGLLPLVVLSTVA, IYVPVVNWLLLFVILCIVIGF, YGIAVTATMVITTVLACVVMV, LLVGAIIAVFLAIDLGFFGAN, and VAQGGWLPLGIGALLFFLLMT.

Belongs to the HAK/KUP transporter (TC 2.A.72) family.

The protein localises to the cell inner membrane. It catalyses the reaction K(+)(in) + H(+)(in) = K(+)(out) + H(+)(out). Transport of potassium into the cell. Likely operates as a K(+):H(+) symporter. The chain is Probable potassium transport system protein Kup from Burkholderia ambifaria (strain ATCC BAA-244 / DSM 16087 / CCUG 44356 / LMG 19182 / AMMD) (Burkholderia cepacia (strain AMMD)).